The chain runs to 965 residues: 26S proteasome non-ATPase regulatory subunit 1 (965 aa).

PC repeat units lie at residues 380-413 (NAVA…EGFG), 418-452 (GAML…EPVR), 454-488 (GACL…VSGE), 489-523 (SAGI…DKTQ), 560-595 (TGIC…DVKR), 630-664 (GAAM…FVRK), 665-706 (GALL…SLVK), and 708-738 (GAII…DMGS). A compositionally biased stretch (low complexity) spans 836-856 (ASASSAAAAPSSSSTSGTAPA). 2 disordered regions span residues 836–889 (ASAS…LQNP) and 943–965 (TPAS…INDF). The segment covering 863-882 (EVDQPGKSKKEKAPEKDTKP) has biased composition (basic and acidic residues).

Belongs to the proteasome subunit S1 family.

Functionally, acts as a regulatory subunit of the 26 proteasome which is involved in the ATP-dependent degradation of ubiquitinated proteins. The polypeptide is 26S proteasome non-ATPase regulatory subunit 1 (rpn-2) (Caenorhabditis elegans).